Reading from the N-terminus, the 297-residue chain is Aspartate carbamoyltransferase catalytic subunit (297 aa).

Carbamoyl phosphate contacts are provided by Arg-49 and Thr-50. Lys-77 contacts L-aspartate. Carbamoyl phosphate is bound by residues Arg-99, His-129, and Gln-132. Positions 162 and 215 each coordinate L-aspartate. Residues Gly-256 and Pro-257 each contribute to the carbamoyl phosphate site.

This sequence belongs to the aspartate/ornithine carbamoyltransferase superfamily. ATCase family. Heterododecamer (2C3:3R2) of six catalytic PyrB chains organized as two trimers (C3), and six regulatory PyrI chains organized as three dimers (R2).

It carries out the reaction carbamoyl phosphate + L-aspartate = N-carbamoyl-L-aspartate + phosphate + H(+). The protein operates within pyrimidine metabolism; UMP biosynthesis via de novo pathway; (S)-dihydroorotate from bicarbonate: step 2/3. Its function is as follows. Catalyzes the condensation of carbamoyl phosphate and aspartate to form carbamoyl aspartate and inorganic phosphate, the committed step in the de novo pyrimidine nucleotide biosynthesis pathway. This Legionella pneumophila (strain Lens) protein is Aspartate carbamoyltransferase catalytic subunit.